We begin with the raw amino-acid sequence, 648 residues long: L-aspartate oxidase 2-b, chloroplastic (648 aa).

FAD contacts are provided by residues S98–A101, K120, S127–G134, and D298. R373 functions as the Proton donor/acceptor in the catalytic mechanism. Residues E458 and S474–L475 each bind FAD.

This sequence belongs to the FAD-dependent oxidoreductase 2 family. NadB subfamily. The cofactor is FAD.

It localises to the plastid. It is found in the chloroplast. It catalyses the reaction L-aspartate + O2 = iminosuccinate + H2O2. The protein operates within alkaloid biosynthesis; nicotine biosynthesis. Its pathway is cofactor biosynthesis; NAD(+) biosynthesis; iminoaspartate from L-aspartate (oxidase route): step 1/1. In terms of biological role, involved in the biosynthesis of pyridine alkaloid natural products, leading mainly to the production of anabasine, anatabine, nicotine and nornicotine, effective deterrents against herbivores with antiparasitic and pesticide properties (neurotoxins); nornicotine serves as the precursor in the synthesis of the carcinogen compound N'-nitrosonornicotine (NNN). Catalyzes the oxidation of L-aspartate to iminoaspartate. The protein is L-aspartate oxidase 2-b, chloroplastic of Nicotiana tabacum (Common tobacco).